Reading from the N-terminus, the 506-residue chain is Maturase K (506 aa).

It belongs to the intron maturase 2 family. MatK subfamily.

The protein resides in the plastid. Its subcellular location is the chloroplast. Usually encoded in the trnK tRNA gene intron. Probably assists in splicing its own and other chloroplast group II introns. The protein is Maturase K of Rhododendron tsusiophyllum (Rhododendron).